Here is a 1041-residue protein sequence, read N- to C-terminus: Histone deacetylase complex subunit SAP130-B (1041 aa).

Disordered regions lie at residues 1–62, 111–131, 572–592, 614–769, and 806–852; these read MSSQ…QEPV, KSTMPSRPIAPAPPSALSAVP, TNQGVQTSSVSSQQASSEPKS, TPAG…PSGA, and VLAN…DEER. Polar residues predominate over residues 18 to 30; it reads VSNSGASVGQNVQ. Residues 33 to 42 show a composition bias toward basic and acidic residues; that stretch reads EVAREIDVQS. The segment covering 576–592 has biased composition (low complexity); the sequence is VQTSSVSSQQASSEPKS. The segment covering 614–641 has biased composition (polar residues); sequence TPAGTTVMQSHSQSPGIGSSPAQGSSPR. Over residues 707-728 the composition is skewed to low complexity; sequence PGAADQPSAAASLPSSHHPTAA.

This sequence belongs to the SAP130 family.

It is found in the nucleus. Acts as a transcriptional repressor. This is Histone deacetylase complex subunit SAP130-B (sap130-b) from Xenopus laevis (African clawed frog).